Here is a 178-residue protein sequence, read N- to C-terminus: Actin-related protein 2/3 complex subunit 3 (178 aa).

Residue K29 forms a Glycyl lysine isopeptide (Lys-Gly) (interchain with G-Cter in ubiquitin) linkage.

Belongs to the ARPC3 family. As to quaternary structure, component of the Arp2/3 complex composed of ARP2, ARP3, ARC40/p41-ARC, ARC35/p34-ARC, ARC18/p21-ARC, ARC19/p20-ARC and ARC16/p16-ARC.

It localises to the cytoplasm. Its subcellular location is the cytoskeleton. Functions as a component of the Arp2/3 complex which is involved in regulation of actin polymerization and together with an activating nucleation-promoting factor (NPF) mediates the formation of branched actin networks. The sequence is that of Actin-related protein 2/3 complex subunit 3 (ARC18) from Saccharomyces cerevisiae (strain ATCC 204508 / S288c) (Baker's yeast).